The primary structure comprises 448 residues: tRNA modification GTPase MnmE (448 aa).

R24, E81, and K120 together coordinate (6S)-5-formyl-5,6,7,8-tetrahydrofolate. Positions G216–G373 constitute a TrmE-type G domain. N226 is a binding site for K(+). Residues N226 to S231, T245 to T251, and D270 to G273 each bind GTP. Position 230 (S230) interacts with Mg(2+). Positions 245, 247, and 250 each coordinate K(+). Residue T251 participates in Mg(2+) binding. Residue K448 participates in (6S)-5-formyl-5,6,7,8-tetrahydrofolate binding.

This sequence belongs to the TRAFAC class TrmE-Era-EngA-EngB-Septin-like GTPase superfamily. TrmE GTPase family. In terms of assembly, homodimer. Heterotetramer of two MnmE and two MnmG subunits. K(+) serves as cofactor.

The protein resides in the cytoplasm. Exhibits a very high intrinsic GTPase hydrolysis rate. Involved in the addition of a carboxymethylaminomethyl (cmnm) group at the wobble position (U34) of certain tRNAs, forming tRNA-cmnm(5)s(2)U34. This chain is tRNA modification GTPase MnmE, found in Neisseria meningitidis serogroup C (strain 053442).